The chain runs to 169 residues: Cell division inhibitor SulA (169 aa).

The segment at alanine 106 to tyrosine 112 is ftsZ binding. Positions lysine 162 to histidine 169 are lon protease binding.

This sequence belongs to the SulA family. Interacts with FtsZ. Post-translationally, is rapidly cleaved and degraded by the Lon protease once DNA damage is repaired.

Component of the SOS system and an inhibitor of cell division. Accumulation of SulA causes rapid cessation of cell division and the appearance of long, non-septate filaments. In the presence of GTP, binds a polymerization-competent form of FtsZ in a 1:1 ratio, thus inhibiting FtsZ polymerization and therefore preventing it from participating in the assembly of the Z ring. This mechanism prevents the premature segregation of damaged DNA to daughter cells during cell division. This Salmonella agona (strain SL483) protein is Cell division inhibitor SulA.